A 353-amino-acid chain; its full sequence is Ferrochelatase (353 aa).

Over residues 1–13 the composition is skewed to basic and acidic residues; the sequence is MTLERTGRDEEKA. The segment at 1 to 23 is disordered; it reads MTLERTGRDEEKALTQPPSGHSS. The Fe cation site is built by His223 and Glu304.

This sequence belongs to the ferrochelatase family.

Its subcellular location is the cytoplasm. The enzyme catalyses heme b + 2 H(+) = protoporphyrin IX + Fe(2+). The protein operates within porphyrin-containing compound metabolism; protoheme biosynthesis; protoheme from protoporphyrin-IX: step 1/1. Functionally, catalyzes the ferrous insertion into protoporphyrin IX. This chain is Ferrochelatase, found in Chelativorans sp. (strain BNC1).